We begin with the raw amino-acid sequence, 118 residues long: Non-specific lipid-transfer protein 2A (118 aa).

Positions 1 to 26 (MARAQLVLVALVAAALLLAGPHTTMA) are cleaved as a signal peptide. Cystine bridges form between C30/C77, C40/C54, C55/C100, and C75/C114.

Belongs to the plant LTP family.

In terms of biological role, plant non-specific lipid-transfer proteins transfer phospholipids as well as galactolipids across membranes. May play a role in wax or cutin deposition in the cell walls of expanding epidermal cells and certain secretory tissues. This Oryza sativa subsp. japonica (Rice) protein is Non-specific lipid-transfer protein 2A (LTP2-A).